We begin with the raw amino-acid sequence, 224 residues long: Probable proteasome subunit beta type-4 (224 aa).

The protein belongs to the peptidase T1B family. As to quaternary structure, the 26S proteasome consists of a 20S proteasome core and two 19S regulatory subunits. The 20S proteasome core is composed of 28 subunits that are arranged in four stacked rings, resulting in a barrel-shaped structure. The two end rings are each formed by seven alpha subunits, and the two central rings are each formed by seven beta subunits. The catalytic chamber with the active sites is on the inside of the barrel.

Its subcellular location is the cytoplasm. It localises to the nucleus. Its function is as follows. Non-catalytic component of the proteasome, a multicatalytic proteinase complex which is characterized by its ability to cleave peptides with Arg, Phe, Tyr, Leu, and Glu adjacent to the leaving group at neutral or slightly basic pH. The proteasome has an ATP-dependent proteolytic activity. The chain is Probable proteasome subunit beta type-4 (CPR1) from Cryptococcus neoformans var. neoformans serotype D (strain B-3501A) (Filobasidiella neoformans).